The sequence spans 228 residues: 2,3-bisphosphoglycerate-dependent phosphoglycerate mutase (228 aa).

Residues 8-15, 21-22, arginine 58, 111-114, lysine 122, 138-139, and 182-183 each bind substrate; these read RHGQSVWN, SG, ERMY, RR, and GN. The active-site Tele-phosphohistidine intermediate is the histidine 9. The active-site Proton donor/acceptor is the glutamate 111.

This sequence belongs to the phosphoglycerate mutase family. BPG-dependent PGAM subfamily.

The catalysed reaction is (2R)-2-phosphoglycerate = (2R)-3-phosphoglycerate. Its pathway is carbohydrate degradation; glycolysis; pyruvate from D-glyceraldehyde 3-phosphate: step 3/5. Functionally, catalyzes the interconversion of 2-phosphoglycerate and 3-phosphoglycerate. The polypeptide is 2,3-bisphosphoglycerate-dependent phosphoglycerate mutase (Chlamydia pneumoniae (Chlamydophila pneumoniae)).